A 567-amino-acid chain; its full sequence is Signal transducer and activator of transcription b (567 aa).

The SH2 domain occupies 449-548; sequence WYDGLVYGFC…LGGRNKPRIR (100 aa).

It belongs to the transcription factor STAT family. In terms of assembly, may interact with sodium-dependent transporter snf-12; the interaction is probably direct.

It localises to the cytoplasm. It is found in the nucleus. The protein localises to the vesicle. In terms of biological role, carries out a dual function: signal transduction and activation of transcription. Required, in concert with transcription factor elt-3, for up-regulation of the vacuolar H(+)-ATPase and acceleration of lysosome maturation at molt. As part of the innate immune response to molting and injury of the adult epidermis, positively regulates the expression of epidermal antimicrobial peptides, such as nlp-29. Through positively modulating the expression of epidermal antimicrobial peptides, such as nlp-29, plays a role in resistance to fungal infection and in the response to physical wounding and phorbol ester PMA treatment. Functions cell autonomously in the epidermis, in concert with sodium-dependent transporter snf-12, probably acting at vesicular membranes, downstream of a p38 MAPK/pmk-1 pathway. The protein is Signal transducer and activator of transcription b of Caenorhabditis elegans.